We begin with the raw amino-acid sequence, 102 residues long: Large ribosomal subunit protein bL21 (102 aa).

The protein belongs to the bacterial ribosomal protein bL21 family. As to quaternary structure, part of the 50S ribosomal subunit. Contacts protein L20.

Functionally, this protein binds to 23S rRNA in the presence of protein L20. The protein is Large ribosomal subunit protein bL21 of Saccharopolyspora erythraea (strain ATCC 11635 / DSM 40517 / JCM 4748 / NBRC 13426 / NCIMB 8594 / NRRL 2338).